The chain runs to 733 residues: Protein OBERON 3 (733 aa).

A compositionally biased stretch (basic and acidic residues) spans M1–R15. Disordered stretches follow at residues M1 to K42 and N118 to N142. A compositionally biased stretch (polar residues) spans P21–T30. Positions N120–L153 form a coiled coil. A PHD-type zinc finger spans residues S436 to K500. Residues V592 to K614 are disordered. The stretch at M644–V733 forms a coiled coil.

Self-interacts. Interacts with OBE1 and OBE2. Interacts with OBE4.

Its subcellular location is the nucleus. Probable transcription factor that functions redundantly with OBE4 in specification of the hypophysis and establishment of the embryonic root. Involved in the activation of ARF5/MP-dependent gene expression during embryonic root meristem initiation. Involved in shoot meristem homeostasis. In Arabidopsis thaliana (Mouse-ear cress), this protein is Protein OBERON 3.